The chain runs to 96 residues: MLLQAFIFLLAGFAAKISALMTNETSDRPLVHFTPNKGWMNDPNGLWYDAKEGKWHLYFQYNPNDTVWGLPLFWVNMTTGVDNLFYIDKFQVREVK.

Residues M1 to A19 form the signal peptide. The N-linked (GlcNAc...) asparagine glycan is linked to N23. Substrate-binding positions include W39 to D42 and Q60. The active site involves D42. N-linked (GlcNAc...) asparagine glycans are attached at residues N64 and N76.

It belongs to the glycosyl hydrolase 32 family.

The enzyme catalyses Hydrolysis of terminal non-reducing beta-D-fructofuranoside residues in beta-D-fructofuranosides.. The chain is Invertase 7 (SUC7) from Saccharomyces cerevisiae (Baker's yeast).